Reading from the N-terminus, the 349-residue chain is Protein RecA (349 aa).

ATP is bound at residue 66–73 (GPESSGKT).

This sequence belongs to the RecA family.

Its subcellular location is the cytoplasm. In terms of biological role, can catalyze the hydrolysis of ATP in the presence of single-stranded DNA, the ATP-dependent uptake of single-stranded DNA by duplex DNA, and the ATP-dependent hybridization of homologous single-stranded DNAs. It interacts with LexA causing its activation and leading to its autocatalytic cleavage. This chain is Protein RecA, found in Psychrobacter sp. (strain PRwf-1).